Consider the following 468-residue polypeptide: Glutamate--tRNA ligase (468 aa).

Residues 11 to 21 (PSPTGFIHLGN) carry the 'HIGH' region motif. The 'KMSKS' region motif lies at 243–247 (KMSKR). Residue Lys246 coordinates ATP.

The protein belongs to the class-I aminoacyl-tRNA synthetase family. Glutamate--tRNA ligase type 1 subfamily. In terms of assembly, monomer.

The protein resides in the cytoplasm. It catalyses the reaction tRNA(Glu) + L-glutamate + ATP = L-glutamyl-tRNA(Glu) + AMP + diphosphate. Functionally, catalyzes the attachment of glutamate to tRNA(Glu) in a two-step reaction: glutamate is first activated by ATP to form Glu-AMP and then transferred to the acceptor end of tRNA(Glu). The protein is Glutamate--tRNA ligase of Delftia acidovorans (strain DSM 14801 / SPH-1).